A 247-amino-acid chain; its full sequence is 3-deoxy-manno-octulosonate cytidylyltransferase (247 aa).

The protein belongs to the KdsB family.

The protein resides in the cytoplasm. It carries out the reaction 3-deoxy-alpha-D-manno-oct-2-ulosonate + CTP = CMP-3-deoxy-beta-D-manno-octulosonate + diphosphate. Its pathway is nucleotide-sugar biosynthesis; CMP-3-deoxy-D-manno-octulosonate biosynthesis; CMP-3-deoxy-D-manno-octulosonate from 3-deoxy-D-manno-octulosonate and CTP: step 1/1. It participates in bacterial outer membrane biogenesis; lipopolysaccharide biosynthesis. Activates KDO (a required 8-carbon sugar) for incorporation into bacterial lipopolysaccharide in Gram-negative bacteria. The polypeptide is 3-deoxy-manno-octulosonate cytidylyltransferase (Methylobacterium radiotolerans (strain ATCC 27329 / DSM 1819 / JCM 2831 / NBRC 15690 / NCIMB 10815 / 0-1)).